The following is a 203-amino-acid chain: Ribosomal RNA large subunit methyltransferase E (203 aa).

S-adenosyl-L-methionine contacts are provided by glycine 60, tryptophan 62, aspartate 79, aspartate 95, and aspartate 119. The active-site Proton acceptor is lysine 159.

This sequence belongs to the class I-like SAM-binding methyltransferase superfamily. RNA methyltransferase RlmE family.

It is found in the cytoplasm. The catalysed reaction is uridine(2552) in 23S rRNA + S-adenosyl-L-methionine = 2'-O-methyluridine(2552) in 23S rRNA + S-adenosyl-L-homocysteine + H(+). Specifically methylates the uridine in position 2552 of 23S rRNA at the 2'-O position of the ribose in the fully assembled 50S ribosomal subunit. This Pelagibacter ubique (strain HTCC1062) protein is Ribosomal RNA large subunit methyltransferase E.